The primary structure comprises 552 residues: Alpha-galactosidase (552 aa).

Residues Trp65, Tyr191, 220-221, 325-327, Cys368, and Arg383 each bind substrate; these read DD and KID. Catalysis depends on Asp327, which acts as the Nucleophile. Asp387 functions as the Proton donor/acceptor in the catalytic mechanism.

It belongs to the glycosyl hydrolase 36 family. Homodimer.

The catalysed reaction is Hydrolysis of terminal, non-reducing alpha-D-galactose residues in alpha-D-galactosides, including galactose oligosaccharides, galactomannans and galactolipids.. Its activity is regulated as follows. Inhibited by hydrolysis product alpha-galactopyranose and to a lesser extent by beta-galactopyranose, its mutarotational product. Inhibited by synthetic cyclopropyl carbasugars. In terms of biological role, hydrolyzes the short-chain alpha-galactosaccharides raffinose, melibiose and stachyose. In Thermotoga maritima (strain ATCC 43589 / DSM 3109 / JCM 10099 / NBRC 100826 / MSB8), this protein is Alpha-galactosidase.